We begin with the raw amino-acid sequence, 492 residues long: Aspartyl/glutamyl-tRNA(Asn/Gln) amidotransferase subunit B (492 aa).

It belongs to the GatB/GatE family. GatB subfamily. In terms of assembly, heterotrimer of A, B and C subunits.

The enzyme catalyses L-glutamyl-tRNA(Gln) + L-glutamine + ATP + H2O = L-glutaminyl-tRNA(Gln) + L-glutamate + ADP + phosphate + H(+). The catalysed reaction is L-aspartyl-tRNA(Asn) + L-glutamine + ATP + H2O = L-asparaginyl-tRNA(Asn) + L-glutamate + ADP + phosphate + 2 H(+). Functionally, allows the formation of correctly charged Asn-tRNA(Asn) or Gln-tRNA(Gln) through the transamidation of misacylated Asp-tRNA(Asn) or Glu-tRNA(Gln) in organisms which lack either or both of asparaginyl-tRNA or glutaminyl-tRNA synthetases. The reaction takes place in the presence of glutamine and ATP through an activated phospho-Asp-tRNA(Asn) or phospho-Glu-tRNA(Gln). The chain is Aspartyl/glutamyl-tRNA(Asn/Gln) amidotransferase subunit B from Prochlorococcus marinus (strain SARG / CCMP1375 / SS120).